The following is a 446-amino-acid chain: Probable D-serine dehydratase (446 aa).

The residue at position 113 (lysine 113) is an N6-(pyridoxal phosphate)lysine.

It belongs to the serine/threonine dehydratase family. DsdA subfamily. Requires pyridoxal 5'-phosphate as cofactor.

The catalysed reaction is D-serine = pyruvate + NH4(+). This chain is Probable D-serine dehydratase, found in Burkholderia lata (strain ATCC 17760 / DSM 23089 / LMG 22485 / NCIMB 9086 / R18194 / 383).